Consider the following 310-residue polypeptide: Methionyl-tRNA formyltransferase (310 aa).

Residue Ser-111 to Pro-114 coordinates (6S)-5,6,7,8-tetrahydrofolate.

It belongs to the Fmt family.

The enzyme catalyses L-methionyl-tRNA(fMet) + (6R)-10-formyltetrahydrofolate = N-formyl-L-methionyl-tRNA(fMet) + (6S)-5,6,7,8-tetrahydrofolate + H(+). In terms of biological role, attaches a formyl group to the free amino group of methionyl-tRNA(fMet). The formyl group appears to play a dual role in the initiator identity of N-formylmethionyl-tRNA by promoting its recognition by IF2 and preventing the misappropriation of this tRNA by the elongation apparatus. This is Methionyl-tRNA formyltransferase from Afipia carboxidovorans (strain ATCC 49405 / DSM 1227 / KCTC 32145 / OM5) (Oligotropha carboxidovorans).